A 631-amino-acid polypeptide reads, in one-letter code: Dolichyl-diphosphooligosaccharide--protein glycosyltransferase subunit 2 (631 aa).

Positions 1–22 are cleaved as a signal peptide; it reads MASPGASTVFLLALTILAGTQA. Over 23 to 540 the chain is Lumenal; it reads LTPTHYLTKP…REPEKRPPTV (518 aa). A glycan (N-linked (GlcNAc...) asparagine) is linked at Asn-106. Residue Lys-154 forms a Glycyl lysine isopeptide (Lys-Gly) (interchain with G-Cter in ubiquitin) linkage. Residues 541–561 traverse the membrane as a helical segment; the sequence is VSNTFTALILSPLLLLFALWI. Topologically, residues 562–571 are cytoplasmic; that stretch reads RIGANVSNFT. The helical transmembrane segment at 572–592 threads the bilayer; it reads FAPSTIIFHLGHAAMLGLMYV. Residues 593-596 lie on the Lumenal side of the membrane; the sequence is YWTQ. Residues 597–617 traverse the membrane as a helical segment; sequence LNMFQTLKYLAILGSVTFLAG. Residues 618–631 lie on the Cytoplasmic side of the membrane; it reads NRMLAQQAIKRTAH.

It belongs to the SWP1 family. Component of the oligosaccharyltransferase (OST) complex. OST exists in two different complex forms which contain common core subunits RPN1, RPN2, OST48, OST4, DAD1 and TMEM258, either STT3A or STT3B as catalytic subunits, and form-specific accessory subunits. STT3A complex assembly occurs through the formation of 3 subcomplexes. Subcomplex 1 contains RPN1 and TMEM258, subcomplex 2 contains the STT3A-specific subunits STT3A, DC2/OSTC, and KCP2 as well as the core subunit OST4, and subcomplex 3 contains RPN2, DAD1, and OST48. The STT3A complex can form stable complexes with the Sec61 complex or with both the Sec61 and TRAP complexes. Interacts with DDI2. Interacts with TMEM35A/NACHO.

The protein localises to the endoplasmic reticulum. Its subcellular location is the endoplasmic reticulum membrane. It functions in the pathway protein modification; protein glycosylation. Functionally, subunit of the oligosaccharyl transferase (OST) complex that catalyzes the initial transfer of a defined glycan (Glc(3)Man(9)GlcNAc(2) in eukaryotes) from the lipid carrier dolichol-pyrophosphate to an asparagine residue within an Asn-X-Ser/Thr consensus motif in nascent polypeptide chains, the first step in protein N-glycosylation. N-glycosylation occurs cotranslationally and the complex associates with the Sec61 complex at the channel-forming translocon complex that mediates protein translocation across the endoplasmic reticulum (ER). All subunits are required for a maximal enzyme activity. This chain is Dolichyl-diphosphooligosaccharide--protein glycosyltransferase subunit 2, found in Canis lupus familiaris (Dog).